The chain runs to 364 residues: Aminomethyltransferase (364 aa).

Belongs to the GcvT family. In terms of assembly, the glycine cleavage system is composed of four proteins: P, T, L and H.

The catalysed reaction is N(6)-[(R)-S(8)-aminomethyldihydrolipoyl]-L-lysyl-[protein] + (6S)-5,6,7,8-tetrahydrofolate = N(6)-[(R)-dihydrolipoyl]-L-lysyl-[protein] + (6R)-5,10-methylene-5,6,7,8-tetrahydrofolate + NH4(+). In terms of biological role, the glycine cleavage system catalyzes the degradation of glycine. In Escherichia coli O17:K52:H18 (strain UMN026 / ExPEC), this protein is Aminomethyltransferase.